We begin with the raw amino-acid sequence, 108 residues long: Small ribosomal subunit protein uS17 (108 aa).

The protein belongs to the universal ribosomal protein uS17 family. Part of the 30S ribosomal subunit.

One of the primary rRNA binding proteins, it binds specifically to the 5'-end of 16S ribosomal RNA. The protein is Small ribosomal subunit protein uS17 of Methanocorpusculum labreanum (strain ATCC 43576 / DSM 4855 / Z).